Reading from the N-terminus, the 1156-residue chain is Nuclear pore-associated protein 1 (1156 aa).

Disordered regions lie at residues 1–60, 155–204, 219–266, 481–515, 680–703, 732–786, 872–915, and 1026–1046; these read MGNL…RRPS, EGPR…FRCS, NSMS…PEPA, GGSYNSVVGAAPLTSDPPTPPSSTPSFKPPVTRES, TLVNSASTASSSKPPIETNAMHTT, NTQP…KTSL, STSF…SSFI, and APGPSSTSGELNIGQGQSGTP. A compositionally biased stretch (basic residues) spans 50–59; the sequence is LFRRNARRRP. The span at 156-165 shows a compositional bias: basic and acidic residues; sequence GPRRVKKDED. Composition is skewed to polar residues over residues 179–197 and 219–231; these read PLSSGEASSTSRSQGTQGD and NSMSEKAQASPAS. Polar residues-rich tracts occupy residues 680 to 692, 732 to 750, 884 to 915, and 1028 to 1046; these read TLVNSASTASSSK, NTQPSGNTASVQGSTSLPA, TTTSSHPLNTGSISHSTLGATDGQQKSDSSFI, and GPSSTSGELNIGQGQSGTP.

Associates with the nuclear pore complex (NPC). As to expression, testis-specific in adults. In fetal brain expressed only from the paternal allele.

Its subcellular location is the nucleus. The protein localises to the nucleoplasm. It localises to the nucleus inner membrane. Its function is as follows. May be involved in spermatogenesis. In Homo sapiens (Human), this protein is Nuclear pore-associated protein 1 (NPAP1).